Reading from the N-terminus, the 232-residue chain is MKNYDEWAHVFKLDPNKEITDEALEAVCESGTDAIIVGGTDNVTLDNTLSLFARIRRFPVTCALEVSDLEAITPGFDYYLIPSVMNSQHVSWVIGHHHKAVKEYGEIINWQELLLEGYCVLNGEARVANHANAQTDLDIEDVVAYARLAEHMYRYPFFYLEYSGKKGPIDVVKRASAVLEKTKLIYGGGIKNAADASEIAAYADVVVVGNGLYENLKEALKTVEAVKEHKCR.

Lys12 serves as a coordination point for sn-glycerol 1-phosphate. 2 residues coordinate Mg(2+): Asp14 and Thr40. Sn-glycerol 1-phosphate contacts are provided by residues Tyr159–Gly164, Gly189, and Gly209–Asn210.

This sequence belongs to the GGGP/HepGP synthase family. Group I subfamily. Homodimer. Mg(2+) serves as cofactor.

The catalysed reaction is sn-glycerol 1-phosphate + all-trans-heptaprenyl diphosphate = 3-heptaprenyl-sn-glycero-1-phosphate + diphosphate. It functions in the pathway membrane lipid metabolism; glycerophospholipid metabolism. In terms of biological role, prenyltransferase that catalyzes in vivo the transfer of the heptaprenyl moiety of heptaprenyl pyrophosphate (HepPP; 35 carbon atoms) to the C3 hydroxyl of sn-glycerol-1-phosphate (G1P), producing heptaprenylglyceryl phosphate (HepGP). This reaction is an ether-bond-formation step in the biosynthesis of archaea-type G1P-based membrane lipids found in Bacillales. The protein is Heptaprenylglyceryl phosphate synthase of Shouchella clausii (strain KSM-K16) (Alkalihalobacillus clausii).